Consider the following 622-residue polypeptide: Leucine-rich repeat-containing protein 70 (622 aa).

Positions 1 to 31 are cleaved as a signal peptide; that stretch reads MCGLQFSLPCLRLFLVVTCYLLLLLHKEILG. One can recognise an LRRNT domain in the interval 32-60; that stretch reads CSSVCQLCTGRQINCRNLGLSSIPKNFPE. 12 LRR repeats span residues 61–82, 85–106, 109–130, 133–154, 157–178, 181–202, 205–226, 229–250, 253–274, 277–298, 301–322, and 326–347; these read STVFLYLTGNNISYINESELTG, SLVALYLDNSNILYVYPKAFVQ, HLYFLFLNNNFIKRLDPGIFKG, NLRNLYLQYNQVSFVPRGVFND, SVQYLNLQRNRLTVLGSGTFVG, ALRILDLSNNNILRISESGFQH, NLACLYLGSNNLTKVPSNAFEV, SLRRLSLSHNPIEAIQPFAFKG, NLEYLLLKNSRIRNVTRDGFSG, NLKHLILSHNDLENLNSDTFSL, NLIYLKLDRNRIISIDNDTFEN, and SLKILNLSFNNLTALHPRVLKP. Asparagine 215 carries an N-linked (GlcNAc...) asparagine glycan. Asparagine 266 is a glycosylation site (N-linked (GlcNAc...) asparagine). N-linked (GlcNAc...) asparagine glycans are attached at residues asparagine 331 and asparagine 400. The LRRCT domain occupies 359-406; the sequence is NPWECNCKLLGLRDWLASSAITLNIYCQNPPSMRGRALRYINITNCVT. Residues 527–547 form a helical membrane-spanning segment; it reads AFDILLAFFILACVLIIFLIY.

In terms of tissue distribution, expressed at low levels in many tissues, including smooth muscle, brain, uterus, pancreas, cartilage, adipose, spleen and testis.

Its subcellular location is the membrane. Renders cells highly sensitive to the activation by cytokines and lipopolysaccharide (LPS). The protein is Leucine-rich repeat-containing protein 70 (LRRC70) of Homo sapiens (Human).